A 254-amino-acid chain; its full sequence is Low affinity immunoglobulin gamma Fc region receptor III-A (254 aa).

An N-terminal signal peptide occupies residues 1–20; sequence MWQLLLPTALLLLVSAGMRA. 2 consecutive Ig-like C2-type domains span residues 24–105 and 107–189; these read PKAV…LEVH and GWLL…VNIT. 2 disulfide bridges follow: C47-C89 and C128-C172. An N-linked (GlcNAc...) asparagine glycan is attached at N187. The helical transmembrane segment at 207 to 229 threads the bilayer; sequence YQVSFCLVMVLLFAVDTGLYFSV. A disordered region spans residues 234–254; that stretch reads PSSTSDWKDHKFKWSKDPQDK. The span at 239 to 254 shows a compositional bias: basic and acidic residues; the sequence is DWKDHKFKWSKDPQDK.

As to quaternary structure, forms a heterooligomeric complex with ITAM-containing signaling subunits, either a homodimer of CD247, a homodimer of FCER1G or a heterodimer of CD247 and FCER1G, to form a functional receptor complex. Interacts (via transmembrane domain) with signaling subunits; this interaction is a prerequisite for receptor complex expression on the cell surface and intracellular signal transduction. Binds the Fc region of antigen-complexed IgG with a preference for IgG1 and IgG3 isotypes. Interacts with CD2; this interaction is involved in NK cell activation and cytotoxicity. Interacts with S100A4; this interaction inhibits PKC-dependent phosphorylation of FCGR3A. In terms of processing, glycosylated. Glycosylation plays an inhibitory role in the interaction with IgG1 and IgG2. Post-translationally, undergoes rapid ectodomain shedding upon NK cell stimulation. The soluble form is produced by a proteolytic cleavage mediated by ADAM17. Repeated stimulation causes receptor shedding, a mechanism that allows for increased NK cell motility and detachment from opsonized target cells while avoiding activation-induced NK cell apoptosis. Lymphocytes and monocytes.

The protein resides in the cell membrane. It localises to the secreted. In terms of biological role, receptor for the invariable Fc fragment of immunoglobulin gamma (IgG). Optimally activated upon binding of clustered antigen-IgG complexes displayed on cell surfaces, triggers lysis of antibody-coated cells, a process known as antibody-dependent cellular cytotoxicity (ADCC). Does not bind free monomeric IgG, thus avoiding inappropriate effector cell activation in the absence of antigenic trigger. Mediates IgG effector functions on natural killer (NK) cells. Binds antigen-IgG complexes generated upon infection and triggers NK cell-dependent cytokine production and degranulation to limit viral load and propagation. Involved in the generation of memory-like adaptive NK cells capable to produce high amounts of IFNG and to efficiently eliminate virus-infected cells via ADCC. Regulates NK cell survival and proliferation, in particular by preventing NK cell progenitor apoptosis. Fc-binding subunit that associates with CD247 and/or FCER1G adapters to form functional signaling complexes. Following the engagement of antigen-IgG complexes, triggers phosphorylation of immunoreceptor tyrosine-based activation motif (ITAM)-containing adapters with subsequent activation of phosphatidylinositol 3-kinase signaling and sustained elevation of intracellular calcium that ultimately drive NK cell activation. The ITAM-dependent signaling coupled to receptor phosphorylation by PKC mediates robust intracellular calcium flux that leads to production of pro-inflammatory cytokines, whereas in the absence of receptor phosphorylation it mainly activates phosphatidylinositol 3-kinase signaling leading to cell degranulation. Costimulates NK cells and trigger lysis of target cells independently of IgG binding. Mediates the antitumor activities of therapeutic antibodies. Upon ligation on monocytes triggers TNFA-dependent ADCC of IgG-coated tumor cells. Mediates enhanced ADCC in response to afucosylated IgGs. This Papio anubis (Olive baboon) protein is Low affinity immunoglobulin gamma Fc region receptor III-A (FCGR3A).